The chain runs to 81 residues: Acyl carrier protein (81 aa).

The 76-residue stretch at 3–78 folds into the Carrier domain; the sequence is QEIFDKIKNI…EAVNIIAEKT (76 aa). Residue Ser-38 is modified to O-(pantetheine 4'-phosphoryl)serine.

The protein belongs to the acyl carrier protein (ACP) family. In terms of processing, 4'-phosphopantetheine is transferred from CoA to a specific serine of apo-ACP by AcpS. This modification is essential for activity because fatty acids are bound in thioester linkage to the sulfhydryl of the prosthetic group.

The protein resides in the cytoplasm. It functions in the pathway lipid metabolism; fatty acid biosynthesis. Its function is as follows. Carrier of the growing fatty acid chain in fatty acid biosynthesis. The sequence is that of Acyl carrier protein from Picosynechococcus sp. (strain ATCC 27264 / PCC 7002 / PR-6) (Agmenellum quadruplicatum).